The primary structure comprises 487 residues: Cytochrome P450 2C16 (487 aa).

Residue Cys432 coordinates heme.

The protein belongs to the cytochrome P450 family. It depends on heme as a cofactor. Expressed constitutively in liver, lung, testes, and kidney.

The protein localises to the endoplasmic reticulum membrane. It localises to the microsome membrane. The catalysed reaction is an organic molecule + reduced [NADPH--hemoprotein reductase] + O2 = an alcohol + oxidized [NADPH--hemoprotein reductase] + H2O + H(+). In terms of biological role, cytochromes P450 are a group of heme-thiolate monooxygenases. In liver microsomes, this enzyme is involved in an NADPH-dependent electron transport pathway. It oxidizes a variety of structurally unrelated compounds, including steroids, fatty acids, and xenobiotics. The chain is Cytochrome P450 2C16 (CYP2C16) from Oryctolagus cuniculus (Rabbit).